The sequence spans 332 residues: MTRMYVGIDHGTSGIKVAAYDGEGDPEFLGKAPRRKVAERGLLRSLPDEARRAVEEAECICLNYGMGDALTEFTPLEEAEDLGVGYGLRDTSGAGREFGAGRRMVEELSELGVEAYLAPGIHRDLPRLDGAFRVFSHVASGEKLGTARLALELSSSKDIVVCDTSSNTVSVVVKDGEVIGGIDACLGAPGVLQGPLDLEAIRRIDAGELSANGAFSTGGIVKIVNCAGEDPESAVEEFIQRCGKEEKEWLARLVAWEVAGLGVVYDCDEAWIGGTLSGDDEFMGVLERVLSKAFNKVAGLPPESASMGLALIAADIASGARSVLGVRISRRP.

The protein belongs to the UPF0285 family.

In Methanopyrus kandleri (strain AV19 / DSM 6324 / JCM 9639 / NBRC 100938), this protein is UPF0285 protein MK0078.